A 1187-amino-acid chain; its full sequence is RNA helicase Mov10l1 (1187 aa).

Positions 273–347 (RSKSCPGAAA…EPEPGGLIPP (75 aa)) are disordered. Basic and acidic residues-rich tracts occupy residues 296-307 (HHREDKTDEIPE) and 322-339 (ACKEESREKGNTPEKQEP). 5 tandem repeats follow at residues 642 to 652 (TRNDSQSITNI), 653 to 663 (IRNDGQSITNV), 664 to 674 (TRNDGQPITKV), 675 to 685 (TRNNSQSITNI), and 686 to 696 (TRNDGQPITKN). The 5 X 11 AA tandem repeats of [TI]-R-N-[DN]-[GS]-Q-[SP]-I-T-[NK]-[IVN] stretch occupies residues 642 to 696 (TRNDSQSITNIIRNDGQSITNVTRNDGQPITKVTRNNSQSITNITRNDGQPITKN). The segment at 686–727 (TRNDGQPITKNKKTVKDQTKHTTEERHVGTTDQPEKASSTAE) is disordered. Positions 699-720 (TVKDQTKHTTEERHVGTTDQPE) are enriched in basic and acidic residues. 772 to 779 (GPPGTGKT) provides a ligand contact to ATP. The DEAG box signature appears at 888 to 891 (DEAG).

It belongs to the DNA2/NAM7 helicase family. SDE3 subfamily. As to quaternary structure, interacts with PIWIL1. Interacts with PIWIL2. Interacts with PIWIL4. Interacts with HSPA2. Interacts with PLD6. Isoform 1: Specifically expressed in testis. Isoform 1: In testis, present in pachytene spermatocytes but absent in postmeiotic spermatids (at protein level). Isoform 2: Present in cardiomyocytes (at protein level). Isoform 2: Heart specific. Isoform 3: Heart specific and is specifically expressed in cardiac myocytes.

It is found in the cytoplasm. The enzyme catalyses ATP + H2O = ADP + phosphate + H(+). Functionally, ATP-dependent RNA helicase required during spermatogenesis to repress transposable elements and prevent their mobilization, which is essential for germline integrity. Acts via the piRNA metabolic process, which mediates the repression of transposable elements during meiosis by forming complexes composed of piRNAs and Piwi proteins and governs the methylation and subsequent repression of transposons. Involved in the primary piRNA metabolic process. Specifically binds to piRNA precursors and promotes the generation of intermediate piRNA processing fragments that are subsequently loaded to Piwi proteins. Acts via its ATP-dependent RNA helicase activity: displays 5'-3' RNA unwinding activity and probably mediates unwinding and funneling of single-stranded piRNA precursor transcripts to the endonuclease that catalyzes the first cleavage step of piRNA processing to generate piRNA intermediate fragments that are subsequently loaded to Piwi proteins. May act downstream of MEF2C during heart formation. Acts as a cardiac-specific suppressor of cardiomyocyte hypertrophy and cell cycle progression, suggesting that it may suppress these processes through the regulation of CDKN1A. Such results however require additional evidence. The sequence is that of RNA helicase Mov10l1 from Mus musculus (Mouse).